The primary structure comprises 537 residues: Carboxypeptidase Y homolog A (537 aa).

Residues 1-17 (MRLSTSALVLGAASSAV) form the signal peptide. A propeptide spanning residues 18-124 (AFDQKVLGDL…RLDNYNLRAK (107 aa)) is cleaved from the precursor. Intrachain disulfides connect cysteine 178-cysteine 418, cysteine 312-cysteine 326, cysteine 336-cysteine 359, cysteine 343-cysteine 352, and cysteine 381-cysteine 388. N-linked (GlcNAc...) asparagine glycosylation occurs at asparagine 209. Serine 265 is a catalytic residue. Aspartate 457 is an active-site residue. Residue asparagine 503 is glycosylated (N-linked (GlcNAc...) asparagine). Residue histidine 514 is part of the active site.

This sequence belongs to the peptidase S10 family.

It localises to the vacuole. The catalysed reaction is Release of a C-terminal amino acid with broad specificity.. Functionally, vacuolar carboxypeptidase involved in degradation of small peptides. Digests preferentially peptides containing an aliphatic or hydrophobic residue in P1' position, as well as methionine, leucine or phenylalanine in P1 position of ester substrate. The chain is Carboxypeptidase Y homolog A (CPYA) from Fusarium vanettenii (strain ATCC MYA-4622 / CBS 123669 / FGSC 9596 / NRRL 45880 / 77-13-4) (Fusarium solani subsp. pisi).